The primary structure comprises 221 residues: Ribonuclease T (221 aa).

The Exonuclease domain occupies 20–196 (VVVDLETGGF…YDTERTAELF (177 aa)). The Mg(2+) site is built by D23, E25, H183, and D188. H183 (proton donor/acceptor) is an active-site residue.

The protein belongs to the RNase T family. In terms of assembly, homodimer. The cofactor is Mg(2+).

Its function is as follows. Trims short 3' overhangs of a variety of RNA species, leaving a one or two nucleotide 3' overhang. Responsible for the end-turnover of tRNA: specifically removes the terminal AMP residue from uncharged tRNA (tRNA-C-C-A). Also appears to be involved in tRNA biosynthesis. The sequence is that of Ribonuclease T from Chromohalobacter salexigens (strain ATCC BAA-138 / DSM 3043 / CIP 106854 / NCIMB 13768 / 1H11).